Here is a 488-residue protein sequence, read N- to C-terminus: WD repeat-containing protein slp1 (488 aa).

Disordered regions lie at residues 1-29 (MEIA…PNSP) and 74-93 (CGSP…FIPS). Over residues 7–17 (SSTISPTFSTP) the composition is skewed to low complexity. 7 WD repeats span residues 178 to 215 (IDDY…VSAL), 219 to 258 (DEST…KLRT), 261 to 298 (GHQA…HQIG), 302 to 341 (GHSS…PKFT), 344 to 386 (NHNA…RVNT), 388 to 429 (DAGS…LTKQ), and 434 to 473 (AHDT…HVKR).

Belongs to the WD repeat CDC20/Fizzy family. Interacts with cdc13, mad3 and mes1.

In terms of biological role, required for mad2-dependent spindle checkpoint activation. Promotes ubiquitin-dependent degradation of cdc13 by the anaphase promoting complex/cyclosome (APC/C). The chain is WD repeat-containing protein slp1 (slp1) from Schizosaccharomyces pombe (strain 972 / ATCC 24843) (Fission yeast).